The chain runs to 913 residues: Eukaryotic translation initiation factor 3 subunit C (913 aa).

Residues 1–22 form a disordered region; that stretch reads MSRFFANGSDSESESSEEEVQA. The span at 11-20 shows a compositional bias: acidic residues; sequence SESESSEEEV. Phosphoserine is present on residues serine 34, serine 165, serine 177, and serine 186. Residues 157-285 form a disordered region; sequence FREAPDQESD…KRAEDDEDGE (129 aa). Over residues 162-171 the composition is skewed to acidic residues; the sequence is DQESDVEEGE. The segment covering 172-184 has biased composition (basic and acidic residues); it reads GEPHDSDGDRAGA. A compositionally biased stretch (acidic residues) spans 214–239; it reads DEDDSDDSIDWDSDTESETESSEDEN. Positions 244–263 are enriched in basic and acidic residues; sequence MRERFLKRTTEKEDKDDDKR. Over residues 264-276 the composition is skewed to basic residues; the sequence is KDKRKEQKHKVRK. A PCI domain is found at 645 to 821; it reads FHMHINLELL…ETVVMHRSEP (177 aa). Residues 856 to 913 are disordered; it reads RGNMGNRDRGYNRNQNNQGGNWGGQRRDNRNQRNRNQRGHHKQQQQQQQQQVQTIEEE. Positions 887–898 are enriched in basic residues; that stretch reads QRNRNQRGHHKQ.

Belongs to the eIF-3 subunit C family. In terms of assembly, component of the eukaryotic translation initiation factor 3 (eIF-3) complex. The eIF-3 complex interacts with pix.

The protein resides in the cytoplasm. Its function is as follows. Component of the eukaryotic translation initiation factor 3 (eIF-3) complex, which is involved in protein synthesis of a specialized repertoire of mRNAs and, together with other initiation factors, stimulates binding of mRNA and methionyl-tRNAi to the 40S ribosome. The eIF-3 complex specifically targets and initiates translation of a subset of mRNAs involved in cell proliferation. The protein is Eukaryotic translation initiation factor 3 subunit C of Drosophila mojavensis (Fruit fly).